We begin with the raw amino-acid sequence, 714 residues long: Polyribonucleotide nucleotidyltransferase (714 aa).

Residues D486 and D492 each contribute to the Mg(2+) site. The 60-residue stretch at 553 to 612 folds into the KH domain; it reads PRIITMKINPEKIRDVIGKGGAVIRALTEETGTTIDIEEDGTIKIGCTSAEAGEEAKKRI. The S1 motif domain maps to 622–690; the sequence is GQVYDGTVLK…DKGRVRLSAK (69 aa).

Belongs to the polyribonucleotide nucleotidyltransferase family. Mg(2+) serves as cofactor.

Its subcellular location is the cytoplasm. The enzyme catalyses RNA(n+1) + phosphate = RNA(n) + a ribonucleoside 5'-diphosphate. Its function is as follows. Involved in mRNA degradation. Catalyzes the phosphorolysis of single-stranded polyribonucleotides processively in the 3'- to 5'-direction. The protein is Polyribonucleotide nucleotidyltransferase of Methylobacillus flagellatus (strain ATCC 51484 / DSM 6875 / VKM B-1610 / KT).